Reading from the N-terminus, the 117-residue chain is Ig heavy chain V region 1-72 (117 aa).

A signal peptide spans 1-19 (MGWSCIMLFLAATATGVHS). The segment at 20–49 (QVQLQQPGAELVKPGASVKLSCKASGYTFT) is framework-1. Cysteines 41 and 115 form a disulfide. The interval 50–54 (SYWMH) is complementarity-determining-1. Residues 55–68 (WVKQRPGRGLEWIG) are framework-2. A complementarity-determining-2 region spans residues 69-85 (RIDPNSGGTKYNEKFKS). Positions 86 to 117 (KATLTVDKPSSTAYMQLSSLTSEDSAVYYCAR) are framework-3.

In Mus musculus (Mouse), this protein is Ig heavy chain V region 1-72.